We begin with the raw amino-acid sequence, 209 residues long: Eukaryotic translation initiation factor 4E (209 aa).

The protein belongs to the eukaryotic initiation factor 4E family. In terms of assembly, eIF4F is a multi-subunit complex, the composition of which varies with external and internal environmental conditions. It is composed of at least eIF4A, eIF4E and eIF4G. eIF4E is also known to interact with other partners.

In terms of biological role, recognizes and binds the 7-methylguanosine-containing mRNA cap during an early step in the initiation of protein synthesis and facilitates ribosome binding by inducing the unwinding of the mRNAs secondary structures. This Candida glabrata (strain ATCC 2001 / BCRC 20586 / JCM 3761 / NBRC 0622 / NRRL Y-65 / CBS 138) (Yeast) protein is Eukaryotic translation initiation factor 4E (TIF45).